The following is a 299-amino-acid chain: Ectoine dioxygenase (299 aa).

Residues 1-40 (MTTTTTNVTDLYPTRGATEVATPRQDPVVWGSPDAPGPVS) are disordered. Q133 is an L-ectoine binding site. K139 provides a ligand contact to 2-oxoglutarate. Residues H150, D152, and H251 each coordinate Fe cation.

This sequence belongs to the PhyH family. EctD subfamily. Homodimer. Fe(2+) serves as cofactor.

The catalysed reaction is L-ectoine + 2-oxoglutarate + O2 = 5-hydroxyectoine + succinate + CO2. In terms of biological role, involved in the biosynthesis of 5-hydroxyectoine, called compatible solute, which helps organisms to survive extreme osmotic stress by acting as a highly soluble organic osmolyte. Catalyzes the 2-oxoglutarate-dependent selective hydroxylation of L-ectoine to yield (4S,5S)-5-hydroxyectoine. In Streptomyces coelicolor (strain ATCC BAA-471 / A3(2) / M145), this protein is Ectoine dioxygenase.